We begin with the raw amino-acid sequence, 204 residues long: ADP-ribosylation factor-like protein 15 (204 aa).

Residues 39–46 (GLTGSGKT), 82–86 (ELGGA), and 142–145 (NHQD) each bind GTP.

It belongs to the small GTPase superfamily. Arf family.

In Mus musculus (Mouse), this protein is ADP-ribosylation factor-like protein 15 (Arl15).